Consider the following 241-residue polypeptide: 2,3-bisphosphoglycerate-dependent phosphoglycerate mutase (241 aa).

Catalysis depends on H12, which acts as the Tele-phosphohistidine intermediate. Substrate is bound by residues 24–25, R61, 117–120, and K128; these read SG and ERYY. E117 (proton donor/acceptor) is an active-site residue.

The protein belongs to the phosphoglycerate mutase family. BPG-dependent PGAM subfamily.

The enzyme catalyses (2R)-2-phosphoglycerate = (2R)-3-phosphoglycerate. The protein operates within carbohydrate degradation; glycolysis; pyruvate from D-glyceraldehyde 3-phosphate: step 3/5. In terms of biological role, catalyzes the interconversion of 2-phosphoglycerate and 3-phosphoglycerate. This Methanosarcina mazei (strain ATCC BAA-159 / DSM 3647 / Goe1 / Go1 / JCM 11833 / OCM 88) (Methanosarcina frisia) protein is 2,3-bisphosphoglycerate-dependent phosphoglycerate mutase.